The chain runs to 493 residues: MQFLARNLVRRVSRTQVVSRNAYSTQTVRDIGQPTPASHPHLMAEGEVTPGIRIEEYIGRRKKLVELLPENSLAIISSAPVKMMTDVVPYTFRQDADYLYLTGCQQPGGVAVLSDERGLCMFMPESTPKDIAWEGEVAGVDAASEVFKADQAYPISKLPEILSDMIRHSSKVFHNVQSASQRYTNLDDFQNSASLGKVKTLSSLTHELRLIKSPAELKLMRESASIACQGLLKTMLHSKGFPDEGILSAQVEYECRVRGAQRMAFNPVVGGGSNASVIHYSRNDQRIKDGDLVLMDMGCELHGYVSDLTRTWPPCGKFSSVQEELYDLILQTNKECIKQCKPGTTIRQLNTYSTELLCDGLMKMGILKSRRLYHQLNPTSIGHYLGMDVHDSSAVGYDRPLQPGFVITIEPGVYIPSSFDCPERFQGIGIRIEDDVLITETGYEVLTGSMPKEIKHIETLLNNHCHDNSARTSPVSLCKVKGLHTNRNPRRLF.

The N-terminal 19 residues, 1–19 (MQFLARNLVRRVSRTQVVS), are a transit peptide targeting the mitochondrion. Mn(2+)-binding residues include aspartate 296, aspartate 307, histidine 383, glutamate 410, and glutamate 433.

Belongs to the peptidase M24B family. Requires Mn(2+) as cofactor.

It is found in the mitochondrion. The protein localises to the nucleus. Its function is as follows. Aminopeptidase which cleaves preprotein intermediates that carry destabilizing N-ter amino acid residues after the mitochondrial processing peptidase (MPP) cleavage site and is thus critical for stabilization of the mitochondrial proteome. The sequence is that of Intermediate cleaving peptidase 55, mitochondrial from Arabidopsis thaliana (Mouse-ear cress).